We begin with the raw amino-acid sequence, 291 residues long: 4-hydroxy-tetrahydrodipicolinate synthase (291 aa).

Residue threonine 45 coordinates pyruvate. The active-site Proton donor/acceptor is the tyrosine 133. Lysine 161 serves as the catalytic Schiff-base intermediate with substrate. Residue isoleucine 203 coordinates pyruvate.

Belongs to the DapA family. In terms of assembly, homotetramer; dimer of dimers.

The protein resides in the cytoplasm. The enzyme catalyses L-aspartate 4-semialdehyde + pyruvate = (2S,4S)-4-hydroxy-2,3,4,5-tetrahydrodipicolinate + H2O + H(+). It functions in the pathway amino-acid biosynthesis; L-lysine biosynthesis via DAP pathway; (S)-tetrahydrodipicolinate from L-aspartate: step 3/4. Its function is as follows. Catalyzes the condensation of (S)-aspartate-beta-semialdehyde [(S)-ASA] and pyruvate to 4-hydroxy-tetrahydrodipicolinate (HTPA). This chain is 4-hydroxy-tetrahydrodipicolinate synthase, found in Neisseria gonorrhoeae (strain ATCC 700825 / FA 1090).